The primary structure comprises 92 residues: Large ribosomal subunit protein eL43 (92 aa).

4 residues coordinate Zn(2+): Cys-39, Cys-42, Cys-57, and Cys-60.

This sequence belongs to the eukaryotic ribosomal protein eL43 family. Component of the large ribosomal subunit. Mature ribosomes consist of a small (40S) and a large (60S) subunit. The 40S subunit contains 32 different proteins and 1 molecule of RNA (18S). The 60S subunit contains 45 different proteins and 3 molecules of RNA (25S, 5.8S and 5S). Requires Zn(2+) as cofactor.

It localises to the cytoplasm. Functionally, component of the ribosome, a large ribonucleoprotein complex responsible for the synthesis of proteins in the cell. The small ribosomal subunit (SSU) binds messenger RNAs (mRNAs) and translates the encoded message by selecting cognate aminoacyl-transfer RNA (tRNA) molecules. The large subunit (LSU) contains the ribosomal catalytic site termed the peptidyl transferase center (PTC), which catalyzes the formation of peptide bonds, thereby polymerizing the amino acids delivered by tRNAs into a polypeptide chain. The nascent polypeptides leave the ribosome through a tunnel in the LSU and interact with protein factors that function in enzymatic processing, targeting, and the membrane insertion of nascent chains at the exit of the ribosomal tunnel. The chain is Large ribosomal subunit protein eL43 from Candida albicans (strain SC5314 / ATCC MYA-2876) (Yeast).